Here is a 222-residue protein sequence, read N- to C-terminus: UPF0502 protein Lcho_2066 (222 aa).

Belongs to the UPF0502 family.

The polypeptide is UPF0502 protein Lcho_2066 (Leptothrix cholodnii (strain ATCC 51168 / LMG 8142 / SP-6) (Leptothrix discophora (strain SP-6))).